We begin with the raw amino-acid sequence, 49 residues long: Large ribosomal subunit protein bL33 (49 aa).

It belongs to the bacterial ribosomal protein bL33 family.

The chain is Large ribosomal subunit protein bL33 from Lactiplantibacillus plantarum (strain ATCC BAA-793 / NCIMB 8826 / WCFS1) (Lactobacillus plantarum).